Consider the following 251-residue polypeptide: Flap endonuclease Xni (251 aa).

Asp104 contributes to the Mg(2+) binding site. One can recognise a 5'-3' exonuclease domain in the interval 160–249; sequence VLPRQLPDYW…IDGNLQQLRL (90 aa). Residues Leu171, Ala172, Pro180, Val182, and Ile185 each contribute to the K(+) site. The interval 184 to 189 is interaction with DNA; it reads GIGPKS.

Belongs to the Xni family. The cofactor is Mg(2+). Requires K(+) as cofactor.

Its function is as follows. Has flap endonuclease activity. During DNA replication, flap endonucleases cleave the 5'-overhanging flap structure that is generated by displacement synthesis when DNA polymerase encounters the 5'-end of a downstream Okazaki fragment. In Salmonella newport (strain SL254), this protein is Flap endonuclease Xni.